The chain runs to 138 residues: MRTLWIMAVLLVGVKGHLMQFENMIKKVTGRSGIWWYGSYGCYCGKGGEGRPQDPSDRCCFVHDCCYGKVTGCDPKDDFYIYSSENGDIVCGDDDLCKKEVCECDKAAAICFRDNMDTYQNKYWFYPASNCKEESEPC.

An N-terminal signal peptide occupies residues Met1–Gly16. 7 cysteine pairs are disulfide-bonded: Cys42–Cys131, Cys44–Cys60, Cys59–Cys111, Cys65–Cys138, Cys66–Cys104, Cys73–Cys97, and Cys91–Cys102. Residues Tyr43, Gly45, and Gly47 each coordinate Ca(2+). His63 is a catalytic residue. Residue Asp64 coordinates Ca(2+). The active site involves Asp105.

This sequence belongs to the phospholipase A2 family. Group II subfamily. D49 sub-subfamily. Ca(2+) serves as cofactor. Expressed by the venom gland.

It localises to the secreted. It catalyses the reaction a 1,2-diacyl-sn-glycero-3-phosphocholine + H2O = a 1-acyl-sn-glycero-3-phosphocholine + a fatty acid + H(+). PLA2 catalyzes the calcium-dependent hydrolysis of the 2-acyl groups in 3-sn-phosphoglycerides. This Protobothrops flavoviridis (Habu) protein is Acidic phospholipase A2 pgPLA 1b/pgPLA 2b.